The chain runs to 158 residues: Cyclic pyranopterin monophosphate synthase (158 aa).

Residues Leu75–His77 and Met113–Glu114 contribute to the substrate site. The active site involves Asp128.

Belongs to the MoaC family. Homohexamer; trimer of dimers.

It carries out the reaction (8S)-3',8-cyclo-7,8-dihydroguanosine 5'-triphosphate = cyclic pyranopterin phosphate + diphosphate. Its pathway is cofactor biosynthesis; molybdopterin biosynthesis. Catalyzes the conversion of (8S)-3',8-cyclo-7,8-dihydroguanosine 5'-triphosphate to cyclic pyranopterin monophosphate (cPMP). This chain is Cyclic pyranopterin monophosphate synthase, found in Acidiphilium cryptum (strain JF-5).